Reading from the N-terminus, the 196-residue chain is ATP-dependent Clp protease proteolytic subunit (196 aa).

Residue S96 is the Nucleophile of the active site. Residue H121 is part of the active site.

The protein belongs to the peptidase S14 family. Fourteen ClpP subunits assemble into 2 heptameric rings which stack back to back to give a disk-like structure with a central cavity, resembling the structure of eukaryotic proteasomes.

The protein resides in the cytoplasm. The enzyme catalyses Hydrolysis of proteins to small peptides in the presence of ATP and magnesium. alpha-casein is the usual test substrate. In the absence of ATP, only oligopeptides shorter than five residues are hydrolyzed (such as succinyl-Leu-Tyr-|-NHMec, and Leu-Tyr-Leu-|-Tyr-Trp, in which cleavage of the -Tyr-|-Leu- and -Tyr-|-Trp bonds also occurs).. Functionally, cleaves peptides in various proteins in a process that requires ATP hydrolysis. Has a chymotrypsin-like activity. Plays a major role in the degradation of misfolded proteins. This chain is ATP-dependent Clp protease proteolytic subunit, found in Streptococcus mutans serotype c (strain ATCC 700610 / UA159).